The sequence spans 324 residues: DNA primase small subunit PriS (324 aa).

Catalysis depends on residues Asp94, Asp96, and Asp274.

Belongs to the eukaryotic-type primase small subunit family. As to quaternary structure, heterodimer of a small subunit (PriS) and a large subunit (PriL). It depends on Mg(2+) as a cofactor. The cofactor is Mn(2+).

Functionally, catalytic subunit of DNA primase, an RNA polymerase that catalyzes the synthesis of short RNA molecules used as primers for DNA polymerase during DNA replication. The small subunit contains the primase catalytic core and has DNA synthesis activity on its own. Binding to the large subunit stabilizes and modulates the activity, increasing the rate of DNA synthesis while decreasing the length of the DNA fragments, and conferring RNA synthesis capability. The DNA polymerase activity may enable DNA primase to also catalyze primer extension after primer synthesis. May also play a role in DNA repair. This chain is DNA primase small subunit PriS, found in Methanobrevibacter smithii (strain ATCC 35061 / DSM 861 / OCM 144 / PS).